The primary structure comprises 253 residues: Large ribosomal subunit protein uL10m (253 aa).

Residues 1–24 (MANLMQRSLPLTTTRTPVLQFLRF) constitute a mitochondrion transit peptide.

Belongs to the universal ribosomal protein uL10 family. Component of the mitochondrial ribosome large subunit (39S) which comprises a 16S rRNA and about 50 distinct proteins.

Its subcellular location is the mitochondrion. This chain is Large ribosomal subunit protein uL10m (mRpL10), found in Drosophila pseudoobscura pseudoobscura (Fruit fly).